Here is a 159-residue protein sequence, read N- to C-terminus: Phosphopantetheine adenylyltransferase (159 aa).

Residue Thr10 coordinates substrate. Residues 10-11 (TF) and His18 each bind ATP. Residues Lys42, Met74, and Arg88 each coordinate substrate. Residues 89–91 (GLR), Glu99, and 124–130 (WSFISSS) contribute to the ATP site.

The protein belongs to the bacterial CoaD family. Homohexamer. Mg(2+) serves as cofactor.

Its subcellular location is the cytoplasm. The enzyme catalyses (R)-4'-phosphopantetheine + ATP + H(+) = 3'-dephospho-CoA + diphosphate. It participates in cofactor biosynthesis; coenzyme A biosynthesis; CoA from (R)-pantothenate: step 4/5. Reversibly transfers an adenylyl group from ATP to 4'-phosphopantetheine, yielding dephospho-CoA (dPCoA) and pyrophosphate. In Salmonella agona (strain SL483), this protein is Phosphopantetheine adenylyltransferase.